The following is a 246-amino-acid chain: Major prion protein (246 aa).

A signal peptide spans 1–15 (MLVLFVATWSDLGLC). The tract at residues 16–223 (KKRPKPGGWN…ESQAYYQRGS (208 aa)) is interaction with GRB2, ERI3 and SYN1. The disordered stretch occupies residues 18-102 (RPKPGGWNTG…HKPSKPKTSM (85 aa)). 5 repeat units span residues 44–52 (PQGGGGWGQ), 53–60 (PHGGGWGQ), 61–68 (PHGGGWGQ), 69–76 (PHGGGWGQ), and 77–84 (PHGGGWGQ). Residues 44–84 (PQGGGGWGQPHGGGWGQPHGGGWGQPHGGGWGQPHGGGWGQ) are 5 X 8 AA tandem repeats of P-H-G-G-G-W-G-Q. Gly residues predominate over residues 45–88 (QGGGGWGQPHGGGWGQPHGGGWGQPHGGGWGQPHGGGWGQGGGT). H54, G55, G56, H62, G63, G64, H70, G71, G72, H78, G79, and G80 together coordinate Cu(2+). Over residues 91-102 (QWHKPSKPKTSM) the composition is skewed to basic residues. C172 and C207 are disulfide-bonded. Residues N174 and N190 are each glycosylated (N-linked (GlcNAc...) asparagine). S223 carries the GPI-anchor amidated serine lipid modification. Residues 224-246 (SMVLFSSPPVILLISFLIFLIVG) constitute a propeptide, removed in mature form.

The protein belongs to the prion family. In terms of assembly, monomer and homodimer. Has a tendency to aggregate into amyloid fibrils containing a cross-beta spine, formed by a steric zipper of superposed beta-strands. Soluble oligomers may represent an intermediate stage on the path to fibril formation. Copper binding may promote oligomerization. Interacts with GRB2, APP, ERI3/PRNPIP and SYN1. Mislocalized cytosolically exposed PrP interacts with MGRN1; this interaction alters MGRN1 subcellular location and causes lysosomal enlargement. Interacts with KIAA1191.

Its subcellular location is the cell membrane. The protein localises to the golgi apparatus. Functionally, its primary physiological function is unclear. Has cytoprotective activity against internal or environmental stresses. May play a role in neuronal development and synaptic plasticity. May be required for neuronal myelin sheath maintenance. May play a role in iron uptake and iron homeostasis. Soluble oligomers are toxic to cultured neuroblastoma cells and induce apoptosis (in vitro). Association with GPC1 (via its heparan sulfate chains) targets PRNP to lipid rafts. Also provides Cu(2+) or Zn(2+) for the ascorbate-mediated GPC1 deaminase degradation of its heparan sulfate side chains. In Cercocebus atys (Sooty mangabey), this protein is Major prion protein (PRNP).